We begin with the raw amino-acid sequence, 176 residues long: Variant surface antigen A (176 aa).

The N-terminal stretch at 1 to 29 (MKKSIFSKKLLVSFGSLVALAAIPLIAIS) is a signal peptide. Cys30 is lipidated: N-palmitoyl cysteine. Residue Cys30 is the site of S-diacylglycerol cysteine attachment. The tract at residues 33–176 (TDNNSSQSQQ…TKTENTQHTS (144 aa)) is disordered. Residues 35-121 (NNSSQSQQPG…GSNSESGMNS (87 aa)) show a composition bias toward low complexity. Residues 123–135 (KTENTQQSEAPGT) form repeat 1. Residues 123 to 176 (KTENTQQSEAPGTNTGNKTTSESNSESGMNSEKTENTQQSEAPGTKTENTQHTS) form a 2.5 X 13 AA repeats region. Residues 126 to 142 (NTQQSEAPGTNTGNKTT) show a composition bias toward polar residues. Residues 143-153 (SESNSESGMNS) show a composition bias toward low complexity. The stretch at 155 to 167 (KTENTQQSEAPGT) is repeat 2. A compositionally biased stretch (polar residues) spans 158-176 (NTQQSEAPGTKTENTQHTS). The stretch at 168-176 (KTENTQHTS) is one 3; truncated repeat.

It is found in the cell membrane. In terms of biological role, responsible for the antigenic diversity for host adaptation. This is Variant surface antigen A (vlpA) from Mesomycoplasma hyorhinis (Mycoplasma hyorhinis).